Reading from the N-terminus, the 382-residue chain is Alcohol dehydrogenase 4 (382 aa).

NAD(+)-binding residues include D40, N72, G99, S100, T139, T140, T148, F150, K161, and G183. Fe(2+)-binding residues include D195, H199, and H264. 2 residues coordinate NAD(+): H268 and H278. H278 provides a ligand contact to Fe(2+).

The protein belongs to the iron-containing alcohol dehydrogenase family. In terms of assembly, homodimer. It depends on Zn(2+) as a cofactor. The cofactor is Fe(2+).

It localises to the mitochondrion. It carries out the reaction a primary alcohol + NAD(+) = an aldehyde + NADH + H(+). The catalysed reaction is ethanol + NAD(+) = acetaldehyde + NADH + H(+). With respect to regulation, inhibited by EDTA. In terms of biological role, alcohol dehydrogenase specific for ethanol. Acts mainyl as a mitochondrial formaldehyde dehydrogenase and has no effect on ethanol production. Shows drastically reduced activity towards primary alcohols from 4 carbon atoms upward. Isomers of aliphatic alcohol, as well as secondary alcohols and glycerol are not used at all. The role of ADH4 in yeast metabolism is not yet known, but ADH4 is not responsible for the production of ethanol during growth on glucose nor responsible for the oxidation of ethanol to acetaldehyde. The sequence is that of Alcohol dehydrogenase 4 from Saccharomyces cerevisiae (strain ATCC 204508 / S288c) (Baker's yeast).